We begin with the raw amino-acid sequence, 318 residues long: NADH-ubiquinone oxidoreductase chain 1 (318 aa).

The next 8 helical transmembrane spans lie at 2 to 22, 69 to 89, 102 to 122, 146 to 166, 171 to 191, 222 to 242, 253 to 273, and 294 to 314; these read FLIN…FLTL, LLFI…WLPI, ILFI…SGWA, LAII…SSLI, YMWI…STLA, LFFL…AILF, EMFT…FLWI, and LPLT…LSSI.

Belongs to the complex I subunit 1 family. Core subunit of respiratory chain NADH dehydrogenase (Complex I) which is composed of 45 different subunits.

The protein resides in the mitochondrion inner membrane. It carries out the reaction a ubiquinone + NADH + 5 H(+)(in) = a ubiquinol + NAD(+) + 4 H(+)(out). Functionally, core subunit of the mitochondrial membrane respiratory chain NADH dehydrogenase (Complex I) which catalyzes electron transfer from NADH through the respiratory chain, using ubiquinone as an electron acceptor. Essential for the catalytic activity and assembly of complex I. The polypeptide is NADH-ubiquinone oxidoreductase chain 1 (MT-ND1) (Oryctolagus cuniculus (Rabbit)).